The primary structure comprises 1133 residues: Eukaryotic translation initiation factor 3 subunit A (1133 aa).

Positions 317–498 constitute a PCI domain; the sequence is IQRMTSHVLI…HCVHFGTDLS (182 aa). Coiled coils occupy residues 573 to 700 and 784 to 886; these read KKIE…YFER and EEER…EADS. A compositionally biased stretch (basic and acidic residues) spans 810 to 893; the sequence is KEEERRRAEE…ADSWRDRRGG (84 aa). Residues 810-1133 are disordered; it reads KEEERRRAEE…DGWTDVKHHR (324 aa). A compositionally biased stretch (low complexity) spans 895–909; the sequence is APAAAAQPNPAAQEA. Basic and acidic residues-rich tracts occupy residues 920-944, 954-1081, and 1097-1117; these read GARE…RDVR, VERR…DSAW, and TRQD…KEAR.

Belongs to the eIF-3 subunit A family. As to quaternary structure, component of the eukaryotic translation initiation factor 3 (eIF-3) complex.

It localises to the cytoplasm. Functionally, RNA-binding component of the eukaryotic translation initiation factor 3 (eIF-3) complex, which is involved in protein synthesis of a specialized repertoire of mRNAs and, together with other initiation factors, stimulates binding of mRNA and methionyl-tRNAi to the 40S ribosome. The eIF-3 complex specifically targets and initiates translation of a subset of mRNAs involved in cell proliferation. The sequence is that of Eukaryotic translation initiation factor 3 subunit A from Aedes aegypti (Yellowfever mosquito).